We begin with the raw amino-acid sequence, 211 residues long: Uracil phosphoribosyltransferase (211 aa).

5-phospho-alpha-D-ribose 1-diphosphate-binding positions include arginine 78, arginine 103, and 130-138 (DPMLATGGT). Residues isoleucine 195 and 200 to 202 (GDA) contribute to the uracil site. Aspartate 201 contacts 5-phospho-alpha-D-ribose 1-diphosphate.

The protein belongs to the UPRTase family. Requires Mg(2+) as cofactor.

The catalysed reaction is UMP + diphosphate = 5-phospho-alpha-D-ribose 1-diphosphate + uracil. It participates in pyrimidine metabolism; UMP biosynthesis via salvage pathway; UMP from uracil: step 1/1. Allosterically activated by GTP. Its function is as follows. Catalyzes the conversion of uracil and 5-phospho-alpha-D-ribose 1-diphosphate (PRPP) to UMP and diphosphate. The chain is Uracil phosphoribosyltransferase from Streptomyces avermitilis (strain ATCC 31267 / DSM 46492 / JCM 5070 / NBRC 14893 / NCIMB 12804 / NRRL 8165 / MA-4680).